The chain runs to 275 residues: Small ribosomal subunit protein uS2 (275 aa).

Residues 226–275 (AAAPNSASVREEEFSAEAGDEGKGRRAPAKKATEKKADAPAAAPEAPAAE) are disordered. Residues 264-275 (APAAAPEAPAAE) are compositionally biased toward low complexity.

The protein belongs to the universal ribosomal protein uS2 family.

This Xanthomonas campestris pv. campestris (strain 8004) protein is Small ribosomal subunit protein uS2.